The following is a 204-amino-acid chain: Ribosomal RNA small subunit methyltransferase J (204 aa).

S-adenosyl-L-methionine is bound by residues 55-56 (RD), 71-72 (ER), and aspartate 123.

It belongs to the methyltransferase superfamily. RsmJ family.

The protein localises to the cytoplasm. The catalysed reaction is guanosine(1516) in 16S rRNA + S-adenosyl-L-methionine = N(2)-methylguanosine(1516) in 16S rRNA + S-adenosyl-L-homocysteine + H(+). Functionally, specifically methylates the guanosine in position 1516 of 16S rRNA. The sequence is that of Ribosomal RNA small subunit methyltransferase J from Rhodopseudomonas palustris (strain TIE-1).